Reading from the N-terminus, the 696-residue chain is Rho-related BTB domain-containing protein 1 (696 aa).

The tract at residues 1–210 (MDADMDYERP…DNAIRAALIS (210 aa)) is rho-like. GTP-binding positions include 21 to 28 (GDNAVGKT), 84 to 88 (DTFGD), and 140 to 143 (CQLD). BTB domains are found at residues 266–427 (ADVL…DEKE) and 485–552 (SDVT…SPNL). The segment at 327 to 348 (VDPEEEREEGPPRIPQADQWKS) is disordered.

This sequence belongs to the small GTPase superfamily. Rho family. As to expression, ubiquitous, with highest levels in skeletal muscle, placenta, testis, stomach, and kidney, followed by uterus and adrenal gland. Expressed in a variety of fetal tissues.

The sequence is that of Rho-related BTB domain-containing protein 1 (RHOBTB1) from Homo sapiens (Human).